A 78-amino-acid chain; its full sequence is Acyl carrier protein (78 aa).

Residues S2–A77 enclose the Carrier domain. S37 bears the O-(pantetheine 4'-phosphoryl)serine mark.

The protein belongs to the acyl carrier protein (ACP) family. In terms of processing, 4'-phosphopantetheine is transferred from CoA to a specific serine of apo-ACP by AcpS. This modification is essential for activity because fatty acids are bound in thioester linkage to the sulfhydryl of the prosthetic group.

It localises to the cytoplasm. It functions in the pathway lipid metabolism; fatty acid biosynthesis. Its function is as follows. Carrier of the growing fatty acid chain in fatty acid biosynthesis. The sequence is that of Acyl carrier protein from Vibrio cholerae serotype O1 (strain ATCC 39315 / El Tor Inaba N16961).